Consider the following 180-residue polypeptide: Chorion protein S19 (180 aa).

Positions 1–21 are cleaved as a signal peptide; that stretch reads MNTFATLAVLFCACLIGNCHG.

The protein belongs to the chorion protein S19 family.

Its subcellular location is the secreted. Functionally, chorion membrane (egg shell) protein; plays a role in protecting the egg from the environment. In Drosophila subobscura (Fruit fly), this protein is Chorion protein S19 (Cp19).